A 71-amino-acid polypeptide reads, in one-letter code: Large ribosomal subunit protein uL29 (71 aa).

The protein belongs to the universal ribosomal protein uL29 family.

This is Large ribosomal subunit protein uL29 from Rickettsia typhi (strain ATCC VR-144 / Wilmington).